Consider the following 131-residue polypeptide: MRHRVKRHKLGRYGSHRKSLLRNLSREIVEHGSIVTTTAKAKALKTFMDKLVSKAIEAATTDDRARSVHLRRQINAVLGDRRLTNKLVDEIAKNYVGRRGGYVRVLRIGFRRGDAAEMSLVQLVEASSQEG.

This sequence belongs to the bacterial ribosomal protein bL17 family. As to quaternary structure, part of the 50S ribosomal subunit. Contacts protein L32.

This chain is Large ribosomal subunit protein bL17, found in Thermotoga maritima (strain ATCC 43589 / DSM 3109 / JCM 10099 / NBRC 100826 / MSB8).